A 1337-amino-acid chain; its full sequence is Receptor-type tyrosine-protein phosphatase eta (1337 aa).

An N-terminal signal peptide occupies residues 1–35 (MKPAAREARLPPRSPGLRWALPLLLLLLRLGQILC). Topologically, residues 36-975 (AGGTPSPIPD…LPQDPGVICG (940 aa)) are extracellular. 2 stretches are compositionally biased toward polar residues: residues 67 to 82 (SFHK…VETN) and 89 to 119 (SSGA…STGP). Residues 67–124 (SFHKQNGTGTPQVETNTSEDGESSGANDSLRTPEQGSNGTDGASQKTPSSTGPSPVFD) form a disordered region. N-linked (GlcNAc...) asparagine glycosylation is found at N72, N82, N93, N104, N142, N172, N192, N231, N258, N278, N342, N351, N376, N391, N396, N413, N431, N501, N525, N536, N582, N603, N618, N628, N637, N666, N669, N761, N772, N784, N790, N824, N910, and N937. Fibronectin type-III domains are found at residues 121–209 (PVFD…EPIP), 207–291 (PIPV…EGGL), 271–364 (NPYL…EFRT), 368–456 (QVFD…PPVP), 457–541 (VSDF…TVPS), 542–623 (AVFD…TAQY), 625–720 (RPSN…TDPA), 721–817 (SMAS…TDPP), and 816–902 (PPPP…SEVL). Residues 278-327 (NKTKGDPLGTEGGLDASNTERSRAGSPTAPVHDESLVGPVDPSSGQQSRD) are disordered. A helical transmembrane segment spans residues 976–996 (AVFGCIFGALVIVTVGGFIFW). Residues 997-1337 (RKKRKDAKNN…TFGKTNGYIA (341 aa)) lie on the Cytoplasmic side of the membrane. A Phosphoserine modification is found at S1009. Residues 1041-1298 (FAEEYEDLKL…VFLNQCVLDI (258 aa)) form the Tyrosine-protein phosphatase domain. Substrate contacts are provided by residues D1205, 1239–1245 (CSAGVGR), and Q1283. C1239 serves as the catalytic Phosphocysteine intermediate.

It belongs to the protein-tyrosine phosphatase family. Receptor class 3 subfamily. As to quaternary structure, monomer. Interacts with CTNNB1 (phosphorylated) and JUP (phosphorylated). Interacts with FLT3 (phosphorylated). Interacts with GAB1 and GRB2. N- and O-glycosylated. In terms of processing, N-glycosylated. As to expression, expressed in the promyelocytic cell line HL-60, the granulocyte-macrophage colony-stimulating factor-dependent leukemic cell line F-36P, and the IL3 and erythropoietin-dependent leukemic cell line F-36E. Expressed predominantly in epithelial cells and lymphocytes. Enhanced expression at high cell density. In terms of tissue distribution, expressed in the brain.

It localises to the cell membrane. The protein resides in the cell projection. The protein localises to the ruffle membrane. Its subcellular location is the cell junction. It is found in the secreted. It localises to the extracellular space. It catalyses the reaction O-phospho-L-tyrosyl-[protein] + H2O = L-tyrosyl-[protein] + phosphate. Tyrosine phosphatase which dephosphorylates or contributes to the dephosphorylation of CTNND1, FLT3, PDGFRB, MET, KDR, LYN, SRC, MAPK1, MAPK3, EGFR, TJP1, OCLN, PIK3R1 and PIK3R2. Plays a role in cell adhesion, migration, proliferation and differentiation. Has a role in megakaryocytes and platelet formation. Involved in vascular development. Regulator of macrophage adhesion and spreading. Positively affects cell-matrix adhesion. Positive regulator of platelet activation and thrombosis. Negative regulator of cell proliferation. Negative regulator of PDGF-stimulated cell migration; through dephosphorylation of PDGFR. Positive regulator of endothelial cell survival, as well as of VEGF-induced SRC and AKT activation; through KDR dephosphorylation. Negative regulator of EGFR signaling pathway; through EGFR dephosphorylation. Enhances the barrier function of epithelial junctions during reassembly. Negatively regulates T-cell receptor (TCR) signaling. Upon T-cell TCR activation, it is up-regulated and excluded from the immunological synapses, while upon T-cell-antigen presenting cells (APC) disengagement, it is no longer excluded and can dephosphorylate PLCG1 and LAT to down-regulate prolongation of signaling. In terms of biological role, activates angiogenesis and cell migration. Downregulates the expression of the endothelial adhesion molecules ICAM1 and VCAM1. This is Receptor-type tyrosine-protein phosphatase eta (PTPRJ) from Homo sapiens (Human).